Reading from the N-terminus, the 221-residue chain is MLFRYLVWLFRFIEVKNIASISLLVIGSNYLTTAIPNNTSTNISPTTSSNYSMTAIPNNTSTNISPTTSSNYSMTAIPNNTSTNISPTTSSNYSMTAIPNNISDKEDYTYFSTDKTASDGFTPITLYRAIRSTLNDTSTKTMTDHGLTRPYRPTTVIFHSDTSLPVKNATRDNIIKKTYRQVLSFFIRSNPLFPCFKNHEVFLNLANILNTILCIIVIKNV.

3 consecutive repeat copies span residues 28-48 (SNYLTTAIPNNTSTNISPTTS), 49-69 (SNYSMTAIPNNTSTNISPTTS), and 70-90 (SNYSMTAIPNNTSTNISPTTS). One copy of the 4; approximate repeat lies at 91–112 (SNYSMTAIPNNISDKEDYTYFS).

This sequence belongs to the asfivirus I196L family.

The polypeptide is Late protein I196L (African swine fever virus (isolate Tick/Malawi/Lil 20-1/1983) (ASFV)).